A 1351-amino-acid polypeptide reads, in one-letter code: DNA-directed RNA polymerase subunit beta' (1351 aa).

Zn(2+) contacts are provided by C70, C72, C85, and C88. D460, D462, and D464 together coordinate Mg(2+). Residues C801, C875, C882, and C885 each coordinate Zn(2+).

It belongs to the RNA polymerase beta' chain family. As to quaternary structure, the RNAP catalytic core consists of 2 alpha, 1 beta, 1 beta' and 1 omega subunit. When a sigma factor is associated with the core the holoenzyme is formed, which can initiate transcription. It depends on Mg(2+) as a cofactor. Requires Zn(2+) as cofactor.

It catalyses the reaction RNA(n) + a ribonucleoside 5'-triphosphate = RNA(n+1) + diphosphate. Its function is as follows. DNA-dependent RNA polymerase catalyzes the transcription of DNA into RNA using the four ribonucleoside triphosphates as substrates. The sequence is that of DNA-directed RNA polymerase subunit beta' from Syntrophobacter fumaroxidans (strain DSM 10017 / MPOB).